Reading from the N-terminus, the 545-residue chain is CTP synthase (545 aa).

The tract at residues Met1–Leu266 is amidoligase domain. Ser14 is a binding site for CTP. UTP is bound at residue Ser14. ATP contacts are provided by residues Ser15 to Ile20 and Asp72. 2 residues coordinate Mg(2+): Asp72 and Glu140. Residues Asp147–Glu149, Lys187–Gln192, and Lys223 contribute to the CTP site. Residues Lys187–Gln192 and Lys223 contribute to the UTP site. Residue Lys239–Val241 participates in ATP binding. One can recognise a Glutamine amidotransferase type-1 domain in the interval Thr291–Arg542. Gly352 provides a ligand contact to L-glutamine. The active-site Nucleophile; for glutamine hydrolysis is Cys379. L-glutamine is bound by residues Leu380–Gln383, Glu403, and Arg470. Active-site residues include His515 and Glu517.

It belongs to the CTP synthase family. As to quaternary structure, homotetramer.

The catalysed reaction is UTP + L-glutamine + ATP + H2O = CTP + L-glutamate + ADP + phosphate + 2 H(+). The enzyme catalyses L-glutamine + H2O = L-glutamate + NH4(+). It carries out the reaction UTP + NH4(+) + ATP = CTP + ADP + phosphate + 2 H(+). It participates in pyrimidine metabolism; CTP biosynthesis via de novo pathway; CTP from UDP: step 2/2. Its activity is regulated as follows. Allosterically activated by GTP, when glutamine is the substrate; GTP has no effect on the reaction when ammonia is the substrate. The allosteric effector GTP functions by stabilizing the protein conformation that binds the tetrahedral intermediate(s) formed during glutamine hydrolysis. Inhibited by the product CTP, via allosteric rather than competitive inhibition. In terms of biological role, catalyzes the ATP-dependent amination of UTP to CTP with either L-glutamine or ammonia as the source of nitrogen. Regulates intracellular CTP levels through interactions with the four ribonucleotide triphosphates. The polypeptide is CTP synthase (Shigella boydii serotype 18 (strain CDC 3083-94 / BS512)).